We begin with the raw amino-acid sequence, 255 residues long: Putative enoyl-CoA hydratase/isomerase YhaR (255 aa).

2 helical membrane passes run 96–116 and 126–146; these read VTIAAIHGAAAGLGLSLALCA and VLAMNFIGIGLVPDGGGHYLL.

Belongs to the enoyl-CoA hydratase/isomerase family.

It localises to the cell membrane. This chain is Putative enoyl-CoA hydratase/isomerase YhaR (yhaR), found in Bacillus subtilis (strain 168).